The following is a 294-amino-acid chain: Glycine--tRNA ligase alpha subunit (294 aa).

This sequence belongs to the class-II aminoacyl-tRNA synthetase family. Tetramer of two alpha and two beta subunits.

It is found in the cytoplasm. The catalysed reaction is tRNA(Gly) + glycine + ATP = glycyl-tRNA(Gly) + AMP + diphosphate. In Trichormus variabilis (strain ATCC 29413 / PCC 7937) (Anabaena variabilis), this protein is Glycine--tRNA ligase alpha subunit.